We begin with the raw amino-acid sequence, 90 residues long: uncharacterized protein (90 aa).

A helical membrane pass occupies residues 32–52 (IIINLIPLVLLFAFFCPCIYF).

The protein localises to the membrane. This is an uncharacterized protein from Schizosaccharomyces pombe (strain 972 / ATCC 24843) (Fission yeast).